Reading from the N-terminus, the 296-residue chain is Maltose/maltodextrin transport system permease protein MalG (296 aa).

Residues 1–12 (MAMVQGKSLKYR) lie on the Cytoplasmic side of the membrane. Residues 13–35 (VWATHIALWAFLSMIIFPLLMIV) traverse the membrane as a helical segment. At 36–88 (AISFREGNFATGSLIPDNPSLEHWKLALGFSVTNADGSVTPPPFPVLTWLWNS) the chain is on the periplasmic side. The region spanning 85–281 (LWNSVKVAGI…LPITIVFLLA (197 aa)) is the ABC transmembrane type-1 domain. The helical transmembrane segment at 89 to 111 (VKVAGITSILIVALSTTSAYAFA) threads the bilayer. At 112–123 (RLRFKGKETILK) the chain is on the cytoplasmic side. Residues 124–143 (AMMIFQMFPAVLALVALYAL) traverse the membrane as a helical segment. Residues 144 to 152 (FDKLGQYIP) are Periplasmic-facing. A helical transmembrane segment spans residues 153–175 (FLGLNTHGGLIFSYLGGIALHVW). Over 176–204 (TIKGYFETIDNSLEEAAALDGATPWQAFR) the chain is Cytoplasmic. The helical transmembrane segment at 205–227 (LVLLPLSVPILAVVFILSFIGVV) threads the bilayer. The Periplasmic segment spans residues 228 to 257 (GEVPVASLLLSDVNSYTLAVGMQQYLYPQN). A helical transmembrane segment spans residues 258–280 (YLWGDFAAAAVLSALPITIVFLL). At 281–296 (AQRWLVGGLTAGGVKG) the chain is on the cytoplasmic side.

This sequence belongs to the binding-protein-dependent transport system permease family. MalFG subfamily. In terms of assembly, the complex is composed of two ATP-binding proteins (MalK), two transmembrane proteins (MalG and MalF) and a solute-binding protein (MalE).

The protein localises to the cell inner membrane. In terms of biological role, part of the ABC transporter complex MalEFGK involved in maltose/maltodextrin import. Probably responsible for the translocation of the substrate across the membrane. The protein is Maltose/maltodextrin transport system permease protein MalG (malG) of Vibrio vulnificus (strain CMCP6).